The sequence spans 817 residues: Cargo-transport protein YPP1 (817 aa).

The protein belongs to the YPP1 family. In terms of assembly, interacts with STT4 and ribosomes.

The protein localises to the cytoplasmic granule. Its subcellular location is the cell membrane. Its function is as follows. Involved in endocytosis. This chain is Cargo-transport protein YPP1 (YPP1), found in Saccharomyces cerevisiae (strain YJM789) (Baker's yeast).